The chain runs to 498 residues: PE-PGRS family protein PE_PGRS33 (498 aa).

The tract at residues 1–30 is essential for translocation to the cell surface; the sequence is MSFVVTIPEALAAVATDLAGIGSTIGTANA. Residues 1–93 form the PE domain; it reads MSFVVTIPEA…AGSYAAAEAA (93 aa). The interacts with TLR2 stretch occupies residues 140–260; the sequence is GNGGAGGSGA…GLFFGVGGAG (121 aa).

This sequence belongs to the mycobacterial PE family. PGRS subfamily. In terms of assembly, interacts with human TLR2.

It localises to the secreted. Its subcellular location is the cell wall. It is found in the cell surface. The protein resides in the cell outer membrane. With respect to regulation, binding of Ca(2+) to PE_PGRS33 induces conformational changes and increases affinity for TLR2. In terms of biological role, induces TNF-alpha release through human Toll-like receptor 2 (TLR2) signaling pathway, leading to macrophage apoptosis. The signaling pathway involves TLR2-dependent activation of the mitogen-activated protein kinase kinase kinase 5 (ASK1), which activates the p38 and JNK MAPKs, leading to enhanced expression of TNF-alpha and tumor necrosis factor receptor superfamily member 1A (TNFRI) genes. Signals are amplified through classical caspase 8-dependent mitochondrial release of cytochrome c, leading to the activation of caspases 9 and 3. Mediates Ca(2+)-dependent up-regulation of the anti-inflammatory cytokine IL-10. Mediates entry into macrophages in a TLR2-dependent mechanism and activates the TLR2-dependent pro-adhesive pathway. This chain is PE-PGRS family protein PE_PGRS33, found in Mycobacterium tuberculosis (strain ATCC 25618 / H37Rv).